The following is a 209-amino-acid chain: Small ribosomal subunit protein uS3 (209 aa).

The 70-residue stretch at 17 to 86 folds into the KH type-2 domain; it reads IDEFLEKELR…NPQIEVEEIK (70 aa).

The protein belongs to the universal ribosomal protein uS3 family. In terms of assembly, part of the 30S ribosomal subunit.

Its function is as follows. Binds the lower part of the 30S subunit head. The polypeptide is Small ribosomal subunit protein uS3 (Thermococcus kodakarensis (strain ATCC BAA-918 / JCM 12380 / KOD1) (Pyrococcus kodakaraensis (strain KOD1))).